We begin with the raw amino-acid sequence, 435 residues long: RuBisCO large subunit-binding protein subunit beta-1 (435 aa).

It belongs to the chaperonin (HSP60) family. As to quaternary structure, oligomer of probably six alpha and six beta subunits.

It is found in the plastid. The protein localises to the chloroplast. Functionally, this protein binds RuBisCO small and large subunits and is implicated in the assembly of the enzyme oligomer. The sequence is that of RuBisCO large subunit-binding protein subunit beta-1 from Chlamydomonas reinhardtii (Chlamydomonas smithii).